Here is a 102-residue protein sequence, read N- to C-terminus: Cytochrome c-553 (102 aa).

A signal peptide spans 1–23 (MKRILVVMSICAALAFGVSAAMA). Positions 33, 36, 37, and 80 each coordinate heme c.

Binds 1 heme c group covalently per subunit.

The protein localises to the periplasm. In terms of biological role, natural electron acceptor for a formate dehydrogenase. The sequence is that of Cytochrome c-553 from Nitratidesulfovibrio vulgaris (strain DSM 19637 / Miyazaki F) (Desulfovibrio vulgaris).